Consider the following 351-residue polypeptide: Anthranilate phosphoribosyltransferase (351 aa).

Residues glycine 80, 83-84 (GD), threonine 88, 90-93 (NIST), 108-116 (KHGNRSITS), and serine 120 contribute to the 5-phospho-alpha-D-ribose 1-diphosphate site. Glycine 80 is a binding site for anthranilate. Serine 92 is a binding site for Mg(2+). An anthranilate-binding site is contributed by asparagine 111. Arginine 166 provides a ligand contact to anthranilate. The Mg(2+) site is built by aspartate 229 and glutamate 230.

This sequence belongs to the anthranilate phosphoribosyltransferase family. Homodimer. Requires Mg(2+) as cofactor.

The catalysed reaction is N-(5-phospho-beta-D-ribosyl)anthranilate + diphosphate = 5-phospho-alpha-D-ribose 1-diphosphate + anthranilate. Its pathway is amino-acid biosynthesis; L-tryptophan biosynthesis; L-tryptophan from chorismate: step 2/5. Its function is as follows. Catalyzes the transfer of the phosphoribosyl group of 5-phosphorylribose-1-pyrophosphate (PRPP) to anthranilate to yield N-(5'-phosphoribosyl)-anthranilate (PRA). In Chlorobaculum tepidum (strain ATCC 49652 / DSM 12025 / NBRC 103806 / TLS) (Chlorobium tepidum), this protein is Anthranilate phosphoribosyltransferase.